A 146-amino-acid chain; its full sequence is Large ribosomal subunit protein uL15 (146 aa).

Residues 1–51 (MKLHELQPAAGSRKVRNRVGRGTSSGNGKTAGRGQKGQKARSGGGVRLGFE) form a disordered region. Gly residues-rich tracts occupy residues 23–35 (TSSGNGKTAGRGQ) and 42–51 (SGGGVRLGFE).

Belongs to the universal ribosomal protein uL15 family. As to quaternary structure, part of the 50S ribosomal subunit.

Binds to the 23S rRNA. The sequence is that of Large ribosomal subunit protein uL15 from Streptococcus gordonii (strain Challis / ATCC 35105 / BCRC 15272 / CH1 / DL1 / V288).